A 549-amino-acid chain; its full sequence is Cytoplasmic trehalase (549 aa).

Substrate contacts are provided by residues Arg-168, 175–176, Asn-212, 221–223, 292–294, and Gly-324; these read WD, RSQ, and RDE. Residues Asp-326 and Glu-509 each act as proton donor/acceptor in the active site. Substrate is bound at residue Glu-525.

This sequence belongs to the glycosyl hydrolase 37 family. As to quaternary structure, monomer.

It localises to the cytoplasm. It catalyses the reaction alpha,alpha-trehalose + H2O = alpha-D-glucose + beta-D-glucose. The protein operates within glycan degradation; trehalose degradation; D-glucose from alpha,alpha-trehalose: step 1/1. In terms of biological role, hydrolyzes trehalose to glucose. Could be involved, in cells returning to low osmolarity conditions, in the utilization of the accumulated cytoplasmic trehalose, which was synthesized in response to high osmolarity. This chain is Cytoplasmic trehalase, found in Escherichia coli O157:H7.